The sequence spans 166 residues: Small ribosomal subunit protein uS5 (166 aa).

An S5 DRBM domain is found at 10-73 (QIEKLISLNR…TSARKNLRFV (64 aa)).

The protein belongs to the universal ribosomal protein uS5 family. Part of the 30S ribosomal subunit. Contacts proteins S4 and S8.

In terms of biological role, with S4 and S12 plays an important role in translational accuracy. Functionally, located at the back of the 30S subunit body where it stabilizes the conformation of the head with respect to the body. This Borrelia garinii subsp. bavariensis (strain ATCC BAA-2496 / DSM 23469 / PBi) (Borreliella bavariensis) protein is Small ribosomal subunit protein uS5.